The following is a 147-amino-acid chain: Bis(5'-nucleosyl)-tetraphosphatase [asymmetrical] (147 aa).

The residue at position 2 (Ala-2) is an N-acetylalanine. The Nudix hydrolase domain occupies 2-139; that stretch reads ALRACGLIIF…EMKAALQEGH (138 aa). The Nudix box motif lies at 43 to 64; that stretch reads GHVEPGESDLETALRETQEEAG.

The protein belongs to the Nudix hydrolase family. Requires a divalent metal cation as cofactor.

The catalysed reaction is P(1),P(4)-bis(5'-guanosyl) tetraphosphate + H2O = GMP + GTP + 2 H(+). It carries out the reaction a 5'-end CoA-ribonucleoside in mRNA + H2O = a 5'-end phospho-adenosine-phospho-ribonucleoside in mRNA + (R)-4'-phosphopantetheine + 2 H(+). The enzyme catalyses a 5'-end FAD-phospho-ribonucleoside in mRNA + H2O = a 5'-end phospho-adenosine-phospho-ribonucleoside in mRNA + FMN + 2 H(+). Its function is as follows. Catalyzes the asymmetric hydrolysis of diadenosine 5',5'''-P1,P4-tetraphosphate (Ap4A) to yield AMP and ATP. Exhibits decapping activity towards FAD-capped RNAs and dpCoA-capped RNAs in vitro. In Bos taurus (Bovine), this protein is Bis(5'-nucleosyl)-tetraphosphatase [asymmetrical] (NUDT2).